A 388-amino-acid polypeptide reads, in one-letter code: Succinate--CoA ligase [ADP-forming] subunit beta (388 aa).

Residues 9 to 245 (KELLKSYGLP…KSQENERELK (237 aa)) enclose the ATP-grasp domain. ATP contacts are provided by residues Lys46, 53 to 55 (GRG), Glu100, Tyr103, and Glu108. Mg(2+) contacts are provided by Asn200 and Asp214. Substrate is bound by residues Asn265 and 322-324 (GIV).

Belongs to the succinate/malate CoA ligase beta subunit family. Heterotetramer of two alpha and two beta subunits. Mg(2+) is required as a cofactor.

It carries out the reaction succinate + ATP + CoA = succinyl-CoA + ADP + phosphate. It catalyses the reaction GTP + succinate + CoA = succinyl-CoA + GDP + phosphate. It functions in the pathway carbohydrate metabolism; tricarboxylic acid cycle; succinate from succinyl-CoA (ligase route): step 1/1. Its function is as follows. Succinyl-CoA synthetase functions in the citric acid cycle (TCA), coupling the hydrolysis of succinyl-CoA to the synthesis of either ATP or GTP and thus represents the only step of substrate-level phosphorylation in the TCA. The beta subunit provides nucleotide specificity of the enzyme and binds the substrate succinate, while the binding sites for coenzyme A and phosphate are found in the alpha subunit. The sequence is that of Succinate--CoA ligase [ADP-forming] subunit beta from Psychrobacter cryohalolentis (strain ATCC BAA-1226 / DSM 17306 / VKM B-2378 / K5).